We begin with the raw amino-acid sequence, 372 residues long: Galanin receptor type 2 (372 aa).

The Extracellular portion of the chain corresponds to methionine 1–valine 28. Asparagine 2 and asparagine 11 each carry an N-linked (GlcNAc...) asparagine glycan. A helical membrane pass occupies residues proline 29–valine 49. Residues leucine 50–threonine 60 lie on the Cytoplasmic side of the membrane. Residues asparagine 61–phenylalanine 81 form a helical membrane-spanning segment. Topologically, residues glutamine 82–lysine 99 are extracellular. Cysteine 98 and cysteine 175 form a disulfide bridge. A helical membrane pass occupies residues alanine 100–leucine 121. Residues aspartate 122–asparagine 141 are Cytoplasmic-facing. A helical membrane pass occupies residues alanine 142–serine 162. Topologically, residues tyrosine 163–methionine 187 are extracellular. The chain crosses the membrane as a helical span at residues aspartate 188–alanine 208. Over arginine 209 to methionine 237 the chain is Cytoplasmic. A helical transmembrane segment spans residues isoleucine 238–cysteine 258. At valine 259–tryptophan 260 the chain is on the extracellular side. Residues phenylalanine 261–serine 281 form a helical membrane-spanning segment. The Cytoplasmic segment spans residues tyrosine 282–cysteine 372. The segment at valine 353–cysteine 372 is disordered. The span at cysteine 361–cysteine 372 shows a compositional bias: polar residues.

Belongs to the G-protein coupled receptor 1 family.

It is found in the cell membrane. In terms of biological role, receptor for the hormone galanin, GALP and spexin-1. The activity of this receptor is mediated by G proteins that activate the phospholipase C/protein kinase C pathway (via G(q)) and that inhibit adenylyl cyclase (via G(i)). In Rattus norvegicus (Rat), this protein is Galanin receptor type 2 (Galr2).